The chain runs to 298 residues: Glycine--tRNA ligase alpha subunit (298 aa).

The protein belongs to the class-II aminoacyl-tRNA synthetase family. As to quaternary structure, tetramer of two alpha and two beta subunits.

The protein resides in the cytoplasm. The catalysed reaction is tRNA(Gly) + glycine + ATP = glycyl-tRNA(Gly) + AMP + diphosphate. The sequence is that of Glycine--tRNA ligase alpha subunit from Gloeothece citriformis (strain PCC 7424) (Cyanothece sp. (strain PCC 7424)).